Consider the following 130-residue polypeptide: Ribonuclease P protein component 2 (130 aa).

This sequence belongs to the eukaryotic/archaeal RNase P protein component 2 family. In terms of assembly, consists of a catalytic RNA component and at least 4-5 protein subunits.

It is found in the cytoplasm. The catalysed reaction is Endonucleolytic cleavage of RNA, removing 5'-extranucleotides from tRNA precursor.. Functionally, part of ribonuclease P, a protein complex that generates mature tRNA molecules by cleaving their 5'-ends. This chain is Ribonuclease P protein component 2, found in Methanococcus maripaludis (strain C7 / ATCC BAA-1331).